Here is a 371-residue protein sequence, read N- to C-terminus: MKNLLDYTLSELEAILSPKFRAKQIYEWIYKKNAENFDEMLNLPKDMRTNLAQEFYFDPLYCVKFEESSDGSIKYLFALKDGNTIESVLLPMKEVEVDEGGNISRHARYTICVSSQVGCKMGCLFCLTAKGGLKRNLSPGEIVGQILWIKKTNHIPYERRVNVVYMGMGEPLDNLANVAKAIQILKEPDGLAISPRRQTVSTSGLGAQIKKLGEMDLGVLLAISLHAVTNELRSKLMPVNKAYNIEAVMDAVRGFPIDMRKRVMFEYLVIRGMNDSVKDAKTLVKLLHGIKAKVNLIYFNPHEGSEYGRPELADMLEFQEYLRAHGVTCTIRQSKGLDISAACGQLKQRSQNLSPSNNNTSKPSDIKKSES.

Glu-86 functions as the Proton acceptor in the catalytic mechanism. Residues 105-338 (RHARYTICVS…CTIRQSKGLD (234 aa)) form the Radical SAM core domain. The cysteines at positions 112 and 343 are disulfide-linked. [4Fe-4S] cluster is bound by residues Cys-119, Cys-123, and Cys-126. Residues 169-170 (GE), Ser-201, 224-226 (SLH), and Asn-300 each bind S-adenosyl-L-methionine. Cys-343 functions as the S-methylcysteine intermediate in the catalytic mechanism. Over residues 348-363 (QRSQNLSPSNNNTSKP) the composition is skewed to polar residues. The disordered stretch occupies residues 348-371 (QRSQNLSPSNNNTSKPSDIKKSES).

Belongs to the radical SAM superfamily. RlmN family. Requires [4Fe-4S] cluster as cofactor.

The protein localises to the cytoplasm. The enzyme catalyses adenosine(2503) in 23S rRNA + 2 reduced [2Fe-2S]-[ferredoxin] + 2 S-adenosyl-L-methionine = 2-methyladenosine(2503) in 23S rRNA + 5'-deoxyadenosine + L-methionine + 2 oxidized [2Fe-2S]-[ferredoxin] + S-adenosyl-L-homocysteine. The catalysed reaction is adenosine(37) in tRNA + 2 reduced [2Fe-2S]-[ferredoxin] + 2 S-adenosyl-L-methionine = 2-methyladenosine(37) in tRNA + 5'-deoxyadenosine + L-methionine + 2 oxidized [2Fe-2S]-[ferredoxin] + S-adenosyl-L-homocysteine. Specifically methylates position 2 of adenine 2503 in 23S rRNA and position 2 of adenine 37 in tRNAs. m2A2503 modification seems to play a crucial role in the proofreading step occurring at the peptidyl transferase center and thus would serve to optimize ribosomal fidelity. This Campylobacter curvus (strain 525.92) protein is Dual-specificity RNA methyltransferase RlmN.